A 210-amino-acid chain; its full sequence is Somatotropin (210 aa).

Positions 1-23 (MARVLVLLSVVLVSLLVNQGRAS) are cleaved as a signal peptide. His-38 is a binding site for Zn(2+). A disulfide bond links Cys-71 and Cys-183. A Zn(2+)-binding site is contributed by Glu-192. Cys-200 and Cys-208 form a disulfide bridge.

This sequence belongs to the somatotropin/prolactin family.

The protein resides in the secreted. In terms of biological role, growth hormone plays an important role in growth control. This is Somatotropin (gh) from Cyprinus carpio (Common carp).